Here is a 2515-residue protein sequence, read N- to C-terminus: Nonribosomal peptide synthetase tpzA (2515 aa).

Positions 246–648 (ELATRQPGAQ…GRMGTQVKLR (403 aa)) are adenylation 1. In terms of domain architecture, Carrier 1 spans 794 to 867 (SEVEHLIHAI…DMATVALKTS (74 aa)). Residue serine 828 is modified to O-(pantetheine 4'-phosphoryl)serine. Residues 924 to 1332 (DAYPCSPLQE…IRSVPHITPE (409 aa)) form a condensation 1 region. Residues 1357-1758 (RKQSQETPSA…GRMNDQIKLR (402 aa)) form an adenylation 2 region. The region spanning 1900–1976 (LATTNEERTL…AILSHLTGRK (77 aa)) is the Carrier 2 domain. Serine 1937 is modified (O-(pantetheine 4'-phosphoryl)serine). The condensation 2 stretch occupies residues 2013–2431 (VEDIYPCGPI…LGILPPEEQK (419 aa)). The Carrier 3 domain maps to 2436–2512 (PSLSAAVVRL…AMARRSLVVS (77 aa)). O-(pantetheine 4'-phosphoryl)serine is present on serine 2473.

It belongs to the NRP synthetase family.

It functions in the pathway secondary metabolite biosynthesis. In terms of biological role, nonribosomal peptide synthetase; part of the gene cluster that mediates the biosynthesis of terreazepine,. The first step of terreazepine biosynthesis is catalyzed by the indoleamine 2,3-dioxygenase tpzB which produces N-formyl-kynurenine through the catabolism of tryptophan. The two-module NRPS tpzA then utilizes anthranilate and kynurenine to assemble terreazepine. The first adenylation domain of tpzA (A1) loads anthranilate onto the T1 domain, while A2 loads kynurenine, generated through spontaneous nonenzymatic deformylation of the tzpB-supplied N-formyl-kynurenine. TpzA produces a 2:1 mixture of S-R enantiomers, which suggests that the A2 domain accepts both D- and L-kynurenine. The peptide bond formation between the tethered amino acids is catalyzed by the first condensation domain (C1) between anthranilate's carbonyl carbon and kynurenine's aliphatic primary amine. The second C domain (C2) catalyzes the final cyclization event between the aromatic amine of kynurenine and the tethered carbonyl carbon, yielding the final terreazepine product. The T3 domain may facilitate the interaction with downstream tailoring enzymes. The protein is Nonribosomal peptide synthetase tpzA of Aspergillus terreus (strain NIH 2624 / FGSC A1156).